A 334-amino-acid chain; its full sequence is MIEADRLISAGVISDEESIDRAIRPKLLAEYVGQPHVREQMEIFIQAAKQRGDALDHVLIFGPPGLGKTTLANIVANEMGVNLRTTSGPVLEKAGDLAAMLTNLEPHDVLFIDEIHRLSPVVEEILYPAMEDYQLDIMIGEGPAARSIKLDLPPFTLIGATTRAGSLTSPLRDRFGIVQRLEFYQVADLEHIVSRSAKCLGLELTPEGAHQLARRSRGTPRITNRLLRRVRDFAEVRADGAINGDVAMKALDMLNVDAEGFDFMDRKLLLAVIDKFMGGPVGLDNLAAAIGEERETIEDVLEPYLIQQGFIQRTPRGRIATNHAYKHFGITREE.

The interval 4-184 (ADRLISAGVI…FGIVQRLEFY (181 aa)) is large ATPase domain (RuvB-L). ATP is bound by residues I23, R24, G65, K68, T69, T70, 131–133 (EDY), R174, Y184, and R221. Mg(2+) is bound at residue T69. The tract at residues 185-255 (QVADLEHIVS…VAMKALDMLN (71 aa)) is small ATPAse domain (RuvB-S). The segment at 258-334 (AEGFDFMDRK…YKHFGITREE (77 aa)) is head domain (RuvB-H). Residues R294, R313, and R318 each coordinate DNA.

Belongs to the RuvB family. As to quaternary structure, homohexamer. Forms an RuvA(8)-RuvB(12)-Holliday junction (HJ) complex. HJ DNA is sandwiched between 2 RuvA tetramers; dsDNA enters through RuvA and exits via RuvB. An RuvB hexamer assembles on each DNA strand where it exits the tetramer. Each RuvB hexamer is contacted by two RuvA subunits (via domain III) on 2 adjacent RuvB subunits; this complex drives branch migration. In the full resolvosome a probable DNA-RuvA(4)-RuvB(12)-RuvC(2) complex forms which resolves the HJ.

The protein localises to the cytoplasm. It carries out the reaction ATP + H2O = ADP + phosphate + H(+). The RuvA-RuvB-RuvC complex processes Holliday junction (HJ) DNA during genetic recombination and DNA repair, while the RuvA-RuvB complex plays an important role in the rescue of blocked DNA replication forks via replication fork reversal (RFR). RuvA specifically binds to HJ cruciform DNA, conferring on it an open structure. The RuvB hexamer acts as an ATP-dependent pump, pulling dsDNA into and through the RuvAB complex. RuvB forms 2 homohexamers on either side of HJ DNA bound by 1 or 2 RuvA tetramers; 4 subunits per hexamer contact DNA at a time. Coordinated motions by a converter formed by DNA-disengaged RuvB subunits stimulates ATP hydrolysis and nucleotide exchange. Immobilization of the converter enables RuvB to convert the ATP-contained energy into a lever motion, pulling 2 nucleotides of DNA out of the RuvA tetramer per ATP hydrolyzed, thus driving DNA branch migration. The RuvB motors rotate together with the DNA substrate, which together with the progressing nucleotide cycle form the mechanistic basis for DNA recombination by continuous HJ branch migration. Branch migration allows RuvC to scan DNA until it finds its consensus sequence, where it cleaves and resolves cruciform DNA. This Yersinia enterocolitica serotype O:8 / biotype 1B (strain NCTC 13174 / 8081) protein is Holliday junction branch migration complex subunit RuvB.